Consider the following 172-residue polypeptide: Myosin regulatory light chain RLC-A (172 aa).

Residues 1–16 (MSSKRAKTKTTKKRPQ) are compositionally biased toward basic residues. Positions 1–20 (MSSKRAKTKTTKKRPQRATS) are disordered. Thr-19 bears the Phosphothreonine; by MLCK mark. A Phosphoserine; by MLCK modification is found at Ser-20. EF-hand domains are found at residues 29–64 (SQIQ…MGKN), 98–133 (DPED…MGDR), and 134–169 (FTDE…GAKD). Ca(2+) contacts are provided by Asp-42, Asn-44, Asp-46, and Asp-53.

Myosin is a hexamer of 2 heavy chains and 4 light chains. Phosphorylation increases the actin-activated myosin ATPase activity and thereby regulates the contractile activity.

Functionally, myosin regulatory subunit that plays an important role in regulation of both smooth muscle and nonmuscle cell contractile activity via its phosphorylation. Implicated in cytokinesis, receptor capping, and cell locomotion. The protein is Myosin regulatory light chain RLC-A (Rlc-a) of Rattus norvegicus (Rat).